Reading from the N-terminus, the 314-residue chain is DNA-directed RNA polymerase subunit alpha (314 aa).

The segment at 1-228 (MIEIEKPKIE…EHLNIFVGLT (228 aa)) is alpha N-terminal domain (alpha-NTD). The interval 245–314 (KEKVLEMTIE…ELGLGLRKDD (70 aa)) is alpha C-terminal domain (alpha-CTD).

The protein belongs to the RNA polymerase alpha chain family. Homodimer. The RNAP catalytic core consists of 2 alpha, 1 beta, 1 beta' and 1 omega subunit. When a sigma factor is associated with the core the holoenzyme is formed, which can initiate transcription.

It catalyses the reaction RNA(n) + a ribonucleoside 5'-triphosphate = RNA(n+1) + diphosphate. Its function is as follows. DNA-dependent RNA polymerase catalyzes the transcription of DNA into RNA using the four ribonucleoside triphosphates as substrates. The protein is DNA-directed RNA polymerase subunit alpha of Bacillus thuringiensis (strain Al Hakam).